A 122-amino-acid polypeptide reads, in one-letter code: MVRLFYNPIKYLFYRRSCKKRLRKALKKLNFYHPPKECCQIYRLLENAPGGTYFITENMTNELIMIAKDPVDKKIKSVKLYLTGNYIKINQHYYINIYMYLMRYNQIYKYPLICFSKYSKIL.

Belongs to the asfivirus MGF 100 family.

Plays a role in virus cell tropism, and may be required for efficient virus replication in macrophages. This chain is Protein MGF 100-1R, found in Ornithodoros (relapsing fever ticks).